We begin with the raw amino-acid sequence, 511 residues long: Maturase K (511 aa).

Belongs to the intron maturase 2 family. MatK subfamily.

It localises to the plastid. Its subcellular location is the chloroplast. Its function is as follows. Usually encoded in the trnK tRNA gene intron. Probably assists in splicing its own and other chloroplast group II introns. This Adesmia lanata protein is Maturase K.